A 258-amino-acid polypeptide reads, in one-letter code: Glutamate racemase (258 aa).

Residues 11–12 (DS) and 43–44 (YG) contribute to the substrate site. Cys-74 acts as the Proton donor/acceptor in catalysis. 75 to 76 (NT) contacts substrate. Cys-182 serves as the catalytic Proton donor/acceptor. 183–184 (TH) contacts substrate.

It belongs to the aspartate/glutamate racemases family.

The catalysed reaction is L-glutamate = D-glutamate. The protein operates within cell wall biogenesis; peptidoglycan biosynthesis. Provides the (R)-glutamate required for cell wall biosynthesis. The chain is Glutamate racemase from Leptospira borgpetersenii serovar Hardjo-bovis (strain JB197).